We begin with the raw amino-acid sequence, 424 residues long: MSANLLKESGPREVFCGLTSIVWLHRRMPDAFFLVVGSRTCAHLIQSAAGVMIFAEPRFGTAILSERDLAGLADAHDELDRVARELLMRRPEIRTLFLVGSCPSEVIKLDLARAAERLNEELQGRVRVVNYSGSGIETTFTQGEDGALAALVPLLPASESRQLLLVGTLADAVEDRLIHLFSKLGIESVRSLPPRQSSELPPVGSGTTVLLTQPFLTETARLLRDRGATVLKAPFPLGAEGSRRWMEAAAADFHCPEASVRAVLDPLEARARIALAPHREVLAGKRIFLLPESQLELPLARFLHRECGMDLVEVGVPYLNREQMAEELALLPDGTTVVEGQHVERQLDRVRAGHPDLVVCGMGLANPLEAEGITTKWSIELVFSPIHGIDQAGDLAELFSRPLHRRQLIHSALHPQASDHPVHA.

Residues cysteine 16, cysteine 41, and cysteine 102 each coordinate [4Fe-4S] cluster.

This sequence belongs to the BchN/ChlN family. In terms of assembly, protochlorophyllide reductase is composed of three subunits; ChlL, ChlN and ChlB. Forms a heterotetramer of two ChlB and two ChlN subunits. It depends on [4Fe-4S] cluster as a cofactor.

The enzyme catalyses chlorophyllide a + oxidized 2[4Fe-4S]-[ferredoxin] + 2 ADP + 2 phosphate = protochlorophyllide a + reduced 2[4Fe-4S]-[ferredoxin] + 2 ATP + 2 H2O. Its pathway is porphyrin-containing compound metabolism; chlorophyll biosynthesis (light-independent). Its function is as follows. Component of the dark-operative protochlorophyllide reductase (DPOR) that uses Mg-ATP and reduced ferredoxin to reduce ring D of protochlorophyllide (Pchlide) to form chlorophyllide a (Chlide). This reaction is light-independent. The NB-protein (ChlN-ChlB) is the catalytic component of the complex. The protein is Light-independent protochlorophyllide reductase subunit N of Synechococcus sp. (strain WH7803).